Here is a 778-residue protein sequence, read N- to C-terminus: Degenerin deg-1 (778 aa).

Over 1-82 (MSNHHSKTKK…IARNSFSKLM (82 aa)) the chain is Cytoplasmic. A helical membrane pass occupies residues 83 to 103 (WGLIIFSFLLMFAYQASKLIF). Over 104 to 711 (KFSAHEKITD…LVNLIADFGG (608 aa)) the chain is Extracellular. Basic and acidic residues predominate over residues 154–165 (NAKTHSKSEGEK). 2 disordered regions span residues 154–180 (NAKTHSKSEGEKKKPKVSRKQHSDASQ) and 201–220 (SNKTLQSQNKSGRRRSQRSI). Residues asparagine 202, asparagine 209, asparagine 272, and asparagine 342 are each glycosylated (N-linked (GlcNAc...) asparagine). A compositionally biased stretch (low complexity) spans 346 to 369 (TSTTTTTTTTPPPTTTSTTTTTTT). Positions 346–380 (TSTTTTTTTTPPPTTTSTTTTTTTTPPPTTTARPN) are disordered. N-linked (GlcNAc...) asparagine glycans are attached at residues asparagine 473, asparagine 492, and asparagine 606. A helical membrane pass occupies residues 712 to 732 (HLGLWLGFSVITVMEVCVLLV). Over 733–778 (DMISLFFKSRHEEKLLRQSTKRKDVPEDKRQITVGSGRKSDAFVSI) the chain is Cytoplasmic.

The protein belongs to the amiloride-sensitive sodium channel (TC 1.A.6) family.

It is found in the membrane. Functionally, probable sodium channel subunit. Required by a subset of neurons. In Caenorhabditis elegans, this protein is Degenerin deg-1.